Consider the following 607-residue polypeptide: Autophagy-related protein 22-2 (607 aa).

The segment at 1-29 (MTVAPPSPNSPAAELQQRPPRYPGEDTTP) is disordered. Residues 41-61 (YGIAAEVFAVCGVGSFLPLTL) form a helical membrane-spanning segment. N-linked (GlcNAc...) asparagine glycosylation occurs at Asn-89. The next 3 membrane-spanning stretches (helical) occupy residues 119–139 (SFAM…LISF), 151–170 (TLLL…FVFI), and 188–208 (CLGS…ANDP). The interval 235–263 (SFSASDAESGPHPAAEAGSGTSSGPASPE) is disordered. Residues 247–263 (PAAEAGSGTSSGPASPE) show a composition bias toward low complexity. 4 helical membrane passes run 274–294 (GVGL…SLLF), 307–327 (TLPL…FTMV), 379–399 (VLVF…VSGT), and 415–435 (VGLL…LWPV). N-linked (GlcNAc...) asparagine glycosylation occurs at Asn-445. The next 4 helical transmembrane spans lie at 450–470 (LCIA…IPVF), 485–507 (FPLA…SFFG), 519–541 (YALY…GMLI), and 550–570 (GFFF…IVNA). Positions 586–607 (KGHETEMSEQTEEAEGLLARGI) are disordered.

The protein belongs to the ATG22 family.

The protein localises to the vacuole membrane. Vacuolar effluxer which mediate the efflux of amino acids resulting from autophagic degradation. The release of autophagic amino acids allows the maintenance of protein synthesis and viability during nitrogen starvation. The sequence is that of Autophagy-related protein 22-2 (atg22-2) from Aspergillus oryzae (strain ATCC 42149 / RIB 40) (Yellow koji mold).